The following is a 79-amino-acid chain: U-actitoxin-Avd8a (79 aa).

An N-terminal signal peptide occupies residues methionine 1–alanine 19. The propeptide occupies asparagine 20 to arginine 36.

The protein belongs to the sea anemone 8 toxin family.

The protein resides in the secreted. It is found in the nematocyst. The polypeptide is U-actitoxin-Avd8a (Anemonia viridis (Snakelocks anemone)).